The chain runs to 212 residues: Large ribosomal subunit protein uL3 (212 aa).

Residue glutamine 153 is modified to N5-methylglutamine.

This sequence belongs to the universal ribosomal protein uL3 family. In terms of assembly, part of the 50S ribosomal subunit. Forms a cluster with proteins L14 and L19. Methylated by PrmB.

One of the primary rRNA binding proteins, it binds directly near the 3'-end of the 23S rRNA, where it nucleates assembly of the 50S subunit. In Acinetobacter baylyi (strain ATCC 33305 / BD413 / ADP1), this protein is Large ribosomal subunit protein uL3.